Consider the following 94-residue polypeptide: Phormicin (94 aa).

An N-terminal signal peptide occupies residues 1–23; the sequence is MKFFMVFVVTFCLAVCFVSQSLA. The propeptide occupies 24 to 54; that stretch reads IPADAANDAHFVDGVQALKEIEPELHGRYKR. 3 cysteine pairs are disulfide-bonded: Cys57–Cys84, Cys70–Cys90, and Cys74–Cys92.

The protein belongs to the invertebrate defensin family. Type 1 subfamily.

It is found in the secreted. Responsible for the anti Gram-positive activity of immune hemolymph of P.terraenovae. The chain is Phormicin from Protophormia terraenovae (Northern blowfly).